We begin with the raw amino-acid sequence, 228 residues long: Mediator of RNA polymerase II transcription subunit 7-A (228 aa).

It belongs to the Mediator complex subunit 7 family. In terms of assembly, component of the Mediator complex.

It localises to the nucleus. In terms of biological role, component of the Mediator complex, a coactivator involved in the regulated transcription of nearly all RNA polymerase II-dependent genes. Mediator functions as a bridge to convey information from gene-specific regulatory proteins to the basal RNA polymerase II transcription machinery. Mediator is recruited to promoters by direct interactions with regulatory proteins and serves as a scaffold for the assembly of a functional preinitiation complex with RNA polymerase II and the general transcription factors. This is Mediator of RNA polymerase II transcription subunit 7-A (med7-a) from Xenopus laevis (African clawed frog).